Reading from the N-terminus, the 213-residue chain is Octanoyltransferase (213 aa).

A BPL/LPL catalytic domain is found at 35 to 213 (DERGDAVLLL…ERHLPTLIEP (179 aa)). Substrate contacts are provided by residues 73–80 (RGGKITWH), 145–147 (AIG), and 158–160 (GFS). The active-site Acyl-thioester intermediate is C176.

This sequence belongs to the LipB family.

It is found in the cytoplasm. It carries out the reaction octanoyl-[ACP] + L-lysyl-[protein] = N(6)-octanoyl-L-lysyl-[protein] + holo-[ACP] + H(+). Its pathway is protein modification; protein lipoylation via endogenous pathway; protein N(6)-(lipoyl)lysine from octanoyl-[acyl-carrier-protein]: step 1/2. Functionally, catalyzes the transfer of endogenously produced octanoic acid from octanoyl-acyl-carrier-protein onto the lipoyl domains of lipoate-dependent enzymes. Lipoyl-ACP can also act as a substrate although octanoyl-ACP is likely to be the physiological substrate. In Salinispora tropica (strain ATCC BAA-916 / DSM 44818 / JCM 13857 / NBRC 105044 / CNB-440), this protein is Octanoyltransferase.